The following is a 492-amino-acid chain: Prenylcysteine oxidase 1-like (492 aa).

Residues 1 to 21 form the signal peptide; it reads MAHAARLLAALAALLAAAATG. An N-linked (GlcNAc...) asparagine glycan is attached at asparagine 340.

It belongs to the prenylcysteine oxidase family. FAD is required as a cofactor.

It is found in the secreted. Its function is as follows. Likely to have oxidoreductase activity. Required in the mevalonate pathway to regulate prenylation and enhances the bactericidal activity of neutrophils. In Bos taurus (Bovine), this protein is Prenylcysteine oxidase 1-like (PCYOX1L).